The following is a 177-amino-acid chain: Large ribosomal subunit protein uL5 (177 aa).

The protein belongs to the universal ribosomal protein uL5 family. As to quaternary structure, part of the 50S ribosomal subunit; part of the 5S rRNA/L5/L18/L25 subcomplex. Contacts the 5S rRNA and the P site tRNA. Forms a bridge to the 30S subunit in the 70S ribosome.

Functionally, this is one of the proteins that bind and probably mediate the attachment of the 5S RNA into the large ribosomal subunit, where it forms part of the central protuberance. In the 70S ribosome it contacts protein S13 of the 30S subunit (bridge B1b), connecting the 2 subunits; this bridge is implicated in subunit movement. Contacts the P site tRNA; the 5S rRNA and some of its associated proteins might help stabilize positioning of ribosome-bound tRNAs. The chain is Large ribosomal subunit protein uL5 from Neorickettsia sennetsu (strain ATCC VR-367 / Miyayama) (Ehrlichia sennetsu).